Reading from the N-terminus, the 169-residue chain is Disulfide bond formation protein B 1 (169 aa).

At 1 to 13 (MSALLKPLDNRLF) the chain is on the cytoplasmic side. The helical transmembrane segment at 14–30 (WPAVAIGGLLILAFVLY) threads the bilayer. At 31–48 (LQHVRGFAPCSLCIFIRL) the chain is on the periplasmic side. The cysteines at positions 40 and 43 are disulfide-linked. Residues 49 to 64 (DVLGLVLAGIVGSLAP) traverse the membrane as a helical segment. The Cytoplasmic portion of the chain corresponds to 65 to 71 (RSRIAGG). Residues 72 to 89 (IAALGMLAASLGGIYHAW) form a helical membrane-spanning segment. Residues 90–145 (SLVAEEKLAAQGMGSCKMFMGFPEWIPLDTWLPQVFQPEGLCGEVVWTLLGQSMAV) lie on the Periplasmic side of the membrane. C105 and C131 form a disulfide bridge. Residues 146–164 (WSLALFVFCLLVLAAKLAF) form a helical membrane-spanning segment. Over 165 to 169 (GRRTA) the chain is Cytoplasmic.

Belongs to the DsbB family.

Its subcellular location is the cell inner membrane. Required for disulfide bond formation in some periplasmic proteins. Acts by oxidizing the DsbA protein. In Pseudomonas aeruginosa (strain UCBPP-PA14), this protein is Disulfide bond formation protein B 1.